The chain runs to 411 residues: UPF0761 membrane protein PA0951 (411 aa).

6 consecutive transmembrane segments (helical) span residues 36 to 56 (LFAVVPMMTVMFSMLSLIPAF), 92 to 112 (HLTWVGVVFLAVTAFTMLVTI), 132 to 152 (FLLYWAILSLGPLLLGAGFAV), 174 to 194 (LLGLMPLAFSVAAFTLLYSAV), 207 to 229 (GGVFTAVLFEAAKTLFGLYVSLF), and 244 to 264 (IFLLWIYLSWMIVLFGAVLVC).

It belongs to the UPF0761 family.

The protein localises to the cell inner membrane. This chain is UPF0761 membrane protein PA0951, found in Pseudomonas aeruginosa (strain ATCC 15692 / DSM 22644 / CIP 104116 / JCM 14847 / LMG 12228 / 1C / PRS 101 / PAO1).